Here is a 333-residue protein sequence, read N- to C-terminus: 5-formaminoimidazole-4-carboxamide-1-(beta)-D-ribofuranosyl 5'-monophosphate synthetase (333 aa).

Residues histidine 21 and serine 84 each coordinate 5-amino-1-(5-phospho-beta-D-ribosyl)imidazole-4-carboxamide. An ATP-grasp domain is found at 118-313 (MELLAAAGIP…YFDEPMDMGE (196 aa)). ATP-binding positions include 141–187 (PVIV…VPAY) and glutamate 209. Asparagine 229 provides a ligand contact to 5-amino-1-(5-phospho-beta-D-ribosyl)imidazole-4-carboxamide. Mg(2+) contacts are provided by glutamate 268 and glutamate 281.

Belongs to the phosphohexose mutase family. Mg(2+) is required as a cofactor. It depends on Mn(2+) as a cofactor.

The catalysed reaction is 5-amino-1-(5-phospho-beta-D-ribosyl)imidazole-4-carboxamide + formate + ATP = 5-formamido-1-(5-phospho-D-ribosyl)imidazole-4-carboxamide + ADP + phosphate. It functions in the pathway purine metabolism; IMP biosynthesis via de novo pathway; 5-formamido-1-(5-phospho-D-ribosyl)imidazole-4-carboxamide from 5-amino-1-(5-phospho-D-ribosyl)imidazole-4-carboxamide (formate route): step 1/1. In terms of biological role, catalyzes the ATP- and formate-dependent formylation of 5-aminoimidazole-4-carboxamide-1-beta-d-ribofuranosyl 5'-monophosphate (AICAR) to 5-formaminoimidazole-4-carboxamide-1-beta-d-ribofuranosyl 5'-monophosphate (FAICAR) in the absence of folates. This chain is 5-formaminoimidazole-4-carboxamide-1-(beta)-D-ribofuranosyl 5'-monophosphate synthetase, found in Pyrobaculum calidifontis (strain DSM 21063 / JCM 11548 / VA1).